Consider the following 557-residue polypeptide: Dihydroxy-acid dehydratase (557 aa).

Asp78 lines the Mg(2+) pocket. Residue Cys119 coordinates [2Fe-2S] cluster. Mg(2+) contacts are provided by Asp120 and Lys121. Residue Lys121 is modified to N6-carboxylysine. Residue Cys194 participates in [2Fe-2S] cluster binding. Mg(2+) is bound at residue Glu446. Catalysis depends on Ser472, which acts as the Proton acceptor.

This sequence belongs to the IlvD/Edd family. As to quaternary structure, homodimer. It depends on [2Fe-2S] cluster as a cofactor. The cofactor is Mg(2+).

The enzyme catalyses (2R)-2,3-dihydroxy-3-methylbutanoate = 3-methyl-2-oxobutanoate + H2O. It catalyses the reaction (2R,3R)-2,3-dihydroxy-3-methylpentanoate = (S)-3-methyl-2-oxopentanoate + H2O. It participates in amino-acid biosynthesis; L-isoleucine biosynthesis; L-isoleucine from 2-oxobutanoate: step 3/4. It functions in the pathway amino-acid biosynthesis; L-valine biosynthesis; L-valine from pyruvate: step 3/4. Its function is as follows. Functions in the biosynthesis of branched-chain amino acids. Catalyzes the dehydration of (2R,3R)-2,3-dihydroxy-3-methylpentanoate (2,3-dihydroxy-3-methylvalerate) into 2-oxo-3-methylpentanoate (2-oxo-3-methylvalerate) and of (2R)-2,3-dihydroxy-3-methylbutanoate (2,3-dihydroxyisovalerate) into 2-oxo-3-methylbutanoate (2-oxoisovalerate), the penultimate precursor to L-isoleucine and L-valine, respectively. In Desulfosudis oleivorans (strain DSM 6200 / JCM 39069 / Hxd3) (Desulfococcus oleovorans), this protein is Dihydroxy-acid dehydratase.